The primary structure comprises 66 residues: Type 3 secretion system chaperone YscE (66 aa).

The protein belongs to the YscE family. As to quaternary structure, component of the heterodimeric YscE-YscG chaperone. The YscE-YscG chaperone forms a stable ternary complex with YscF/SctF. YscE interacts with YscG, but makes very little direct contact with YscF. Homodimer in solution.

It localises to the cytoplasm. Chaperone of the type III secretion system (T3SS), also called injectisome, which is used to inject bacterial effector proteins into eukaryotic host cells. Along with YscG, prevents premature polymerization of the YscF/SctF needle protein within the cytoplasm. Is also required for stable expression of cytosolic YscF and for YscF secretion. Likely plays a role in targeting YscF present in the cytosolic YscEFG complex to the T3SS apparatus. Required for Yop secretion. This chain is Type 3 secretion system chaperone YscE, found in Yersinia pestis.